An 876-amino-acid polypeptide reads, in one-letter code: Leucine--tRNA ligase (876 aa).

The 'HIGH' region motif lies at 42–52; the sequence is PYPSGKLHMGH. The 'KMSKS' region signature appears at 634–638; sequence KMSKS. An ATP-binding site is contributed by lysine 637.

The protein belongs to the class-I aminoacyl-tRNA synthetase family.

It localises to the cytoplasm. It catalyses the reaction tRNA(Leu) + L-leucine + ATP = L-leucyl-tRNA(Leu) + AMP + diphosphate. The chain is Leucine--tRNA ligase from Neisseria meningitidis serogroup C / serotype 2a (strain ATCC 700532 / DSM 15464 / FAM18).